The following is a 444-amino-acid chain: N-succinylarginine dihydrolase (444 aa).

Substrate-binding positions include 19 to 28 (AGLSFGNVAS), Asn110, and 137 to 138 (HR). The active site involves Glu174. A substrate-binding site is contributed by Arg214. His250 is an active-site residue. Residues Asp252 and Asn362 each contribute to the substrate site. The Nucleophile role is filled by Cys368.

The protein belongs to the succinylarginine dihydrolase family. As to quaternary structure, homodimer.

The catalysed reaction is N(2)-succinyl-L-arginine + 2 H2O + 2 H(+) = N(2)-succinyl-L-ornithine + 2 NH4(+) + CO2. Its pathway is amino-acid degradation; L-arginine degradation via AST pathway; L-glutamate and succinate from L-arginine: step 2/5. Functionally, catalyzes the hydrolysis of N(2)-succinylarginine into N(2)-succinylornithine, ammonia and CO(2). In Shewanella putrefaciens (strain CN-32 / ATCC BAA-453), this protein is N-succinylarginine dihydrolase.